The sequence spans 402 residues: uncharacterized protein (402 aa).

12 consecutive transmembrane segments (helical) span residues 23-43, 52-72, 90-110, 121-141, 158-178, 180-200, 228-248, 255-275, 282-302, 309-329, 351-371, and 375-395; these read IVSV…PLAV, LGYG…ATLL, VLYG…SVAI, LLVG…AAIG, WNGI…VLLV, WLGL…GFAL, GMGL…ITLY, ANAV…RLLF, LGGF…LLLL, WVGL…FPAF, LFVD…ANLF, and SMFL…VALH.

Belongs to the major facilitator superfamily. YhhS family.

It localises to the cell inner membrane. This is an uncharacterized protein from Pseudomonas aeruginosa (strain ATCC 15692 / DSM 22644 / CIP 104116 / JCM 14847 / LMG 12228 / 1C / PRS 101 / PAO1).